The chain runs to 122 residues: Succinate dehydrogenase assembly factor 3, mitochondrial (122 aa).

A mitochondrion-targeting transit peptide spans 1–47 (MHPSVVRLVKPRRPERITSPILPPLPLYRAILRAHHRKLPQELRYLG).

It belongs to the complex I LYR family. SDHAF3 subfamily. Interacts with the iron-sulfur protein subunit within the SDH catalytic dimer.

It is found in the mitochondrion matrix. Functionally, plays an essential role in the assembly of succinate dehydrogenase (SDH), an enzyme complex (also referred to as respiratory complex II) that is a component of both the tricarboxylic acid (TCA) cycle and the mitochondrial electron transport chain, and which couples the oxidation of succinate to fumarate with the reduction of ubiquinone (coenzyme Q) to ubiquinol. Promotes maturation of the iron-sulfur protein subunit of the SDH catalytic dimer, protecting it from the deleterious effects of oxidants. May act together with SDHAF1. The polypeptide is Succinate dehydrogenase assembly factor 3, mitochondrial (Candida albicans (strain SC5314 / ATCC MYA-2876) (Yeast)).